Reading from the N-terminus, the 563-residue chain is Arginine--tRNA ligase (563 aa).

Positions 121-131 (PNIAKPFSIGH) match the 'HIGH' region motif.

This sequence belongs to the class-I aminoacyl-tRNA synthetase family. As to quaternary structure, monomer.

It is found in the cytoplasm. It catalyses the reaction tRNA(Arg) + L-arginine + ATP = L-arginyl-tRNA(Arg) + AMP + diphosphate. The sequence is that of Arginine--tRNA ligase from Streptococcus pyogenes serotype M6 (strain ATCC BAA-946 / MGAS10394).